The following is a 161-amino-acid chain: Regulator of ribonuclease activity A (161 aa).

The protein belongs to the RraA family. As to quaternary structure, homotrimer. Binds to both RNA-binding sites in the C-terminal region of Rne and to RhlB.

Its subcellular location is the cytoplasm. Globally modulates RNA abundance by binding to RNase E (Rne) and regulating its endonucleolytic activity. Can modulate Rne action in a substrate-dependent manner by altering the composition of the degradosome. Modulates RNA-binding and helicase activities of the degradosome. This chain is Regulator of ribonuclease activity A, found in Alteromonas mediterranea (strain DSM 17117 / CIP 110805 / LMG 28347 / Deep ecotype).